A 226-amino-acid polypeptide reads, in one-letter code: Cysteine and histidine-rich domain-containing protein RAR1 (226 aa).

8 residues coordinate Zn(2+): cysteine 12, cysteine 17, cysteine 31, histidine 34, cysteine 49, cysteine 50, cysteine 66, and histidine 71. The CHORD 1 domain occupies 12–71 (CQRIGCNAMFTDDDNPQGSCQFHASGPFFHDGMKEWSCCKQRSHDFSLFLEIPGCKTGKH). Residues 104–124 (CSRCRQGFFCSDHGSQPKEQI) carry the CCCH motif. Positions 159, 164, 178, 181, 196, 197, 213, and 218 each coordinate Zn(2+). In terms of domain architecture, CHORD 2 spans 159 to 218 (CKNKGCGQTFKERDNHETACSHHPGPAVFHDRLRGWKCCDVHVKEFDEFMEIPPCTKGWH).

In terms of assembly, interacts with HSP90-1, HSP90-2, SGT1A and SGT1B. Forms a ternary complex with SGT1A and barley HSP90.

Required specifically for plant innate immunity. Is essential for resistance conferred by multiple R genes recognizing different bacterial and oomycete pathogen isolates like avirulent P.syringae or H.parasitica (downy mildew). Contributes additively with SGT1B to RPP5-dependent resistance. Functions as a positive regulator of RPS5 accumulation by assisting its stabilization. May function as co-chaperone of HSP90-2 to positively regulate the steady-state accumulation of RPM1 and protect it from SGT1-mediated degradation. Acts as a negative regulator of pathogen-associated molecular pattern (PAMP)-triggered immunity. In Arabidopsis thaliana (Mouse-ear cress), this protein is Cysteine and histidine-rich domain-containing protein RAR1 (RAR1).